Consider the following 346-residue polypeptide: UDP-3-O-acylglucosamine N-acyltransferase (346 aa).

H253 functions as the Proton acceptor in the catalytic mechanism.

It belongs to the transferase hexapeptide repeat family. LpxD subfamily. Homotrimer.

The catalysed reaction is a UDP-3-O-[(3R)-3-hydroxyacyl]-alpha-D-glucosamine + a (3R)-hydroxyacyl-[ACP] = a UDP-2-N,3-O-bis[(3R)-3-hydroxyacyl]-alpha-D-glucosamine + holo-[ACP] + H(+). The protein operates within bacterial outer membrane biogenesis; LPS lipid A biosynthesis. In terms of biological role, catalyzes the N-acylation of UDP-3-O-acylglucosamine using 3-hydroxyacyl-ACP as the acyl donor. Is involved in the biosynthesis of lipid A, a phosphorylated glycolipid that anchors the lipopolysaccharide to the outer membrane of the cell. In Rickettsia peacockii (strain Rustic), this protein is UDP-3-O-acylglucosamine N-acyltransferase.